Reading from the N-terminus, the 68-residue chain is Protein P33 (68 aa).

A coiled-coil region spans residues 34-63; sequence IVNLQGRIAELEARETEMLARVDTLIARLA.

Its function is as follows. Assembly protein. The protein is Protein P33 (XXXIII) of Acinetobacter calcoaceticus (Arthrobacter siderocapsulatus).